Consider the following 381-residue polypeptide: tRNA-cytidine(32) 2-sulfurtransferase (381 aa).

The PP-loop motif motif lies at 101 to 106 (SGGKDS). [4Fe-4S] cluster-binding residues include cysteine 176, cysteine 179, and cysteine 267.

It belongs to the TtcA family. In terms of assembly, homodimer. The cofactor is Mg(2+). [4Fe-4S] cluster is required as a cofactor.

Its subcellular location is the cytoplasm. The catalysed reaction is cytidine(32) in tRNA + S-sulfanyl-L-cysteinyl-[cysteine desulfurase] + AH2 + ATP = 2-thiocytidine(32) in tRNA + L-cysteinyl-[cysteine desulfurase] + A + AMP + diphosphate + H(+). It functions in the pathway tRNA modification. In terms of biological role, catalyzes the ATP-dependent 2-thiolation of cytidine in position 32 of tRNA, to form 2-thiocytidine (s(2)C32). The sulfur atoms are provided by the cysteine/cysteine desulfurase (IscS) system. This Psychrobacter cryohalolentis (strain ATCC BAA-1226 / DSM 17306 / VKM B-2378 / K5) protein is tRNA-cytidine(32) 2-sulfurtransferase.